Reading from the N-terminus, the 1394-residue chain is ATP-dependent permease AUS1 (1394 aa).

The Cytoplasmic segment spans residues M1–R420. The ABC transporter 1 domain maps to K33–D273. Transmembrane regions (helical) follow at residues G421–F443, T468–A490, A497–L519, V529–L551, F558–L575, and V636–S658. Topologically, residues Q659 to T1080 are cytoplasmic. The ABC transporter 2 domain maps to I751–V978. Residue G782–T789 coordinates ATP. The next 6 membrane-spanning stretches (helical) occupy residues Y1081–I1103, I1107–N1129, V1156–V1178, A1193–I1215, A1224–S1246, and F1346–Y1368. Over V1369–N1394 the chain is Cytoplasmic.

It belongs to the ABC transporter superfamily. ABCG family. PDR (TC 3.A.1.205) subfamily.

Its subcellular location is the membrane. Its function is as follows. Transporter involved in the uptake of sterol. In Saccharomyces cerevisiae (strain ATCC 204508 / S288c) (Baker's yeast), this protein is ATP-dependent permease AUS1 (AUS1).